A 374-amino-acid chain; its full sequence is Ribosomal RNA large subunit methyltransferase G (374 aa).

This sequence belongs to the methyltransferase superfamily. RlmG family.

It localises to the cytoplasm. It catalyses the reaction guanosine(1835) in 23S rRNA + S-adenosyl-L-methionine = N(2)-methylguanosine(1835) in 23S rRNA + S-adenosyl-L-homocysteine + H(+). Specifically methylates the guanine in position 1835 (m2G1835) of 23S rRNA. The polypeptide is Ribosomal RNA large subunit methyltransferase G (Pseudomonas putida (strain W619)).